The sequence spans 111 residues: Regulator of ribonuclease activity B (111 aa).

Belongs to the RraB family. Interacts with the C-terminal region of Rne.

It localises to the cytoplasm. In terms of biological role, globally modulates RNA abundance by binding to RNase E (Rne) and regulating its endonucleolytic activity. Can modulate Rne action in a substrate-dependent manner by altering the composition of the degradosome. The polypeptide is Regulator of ribonuclease activity B (Pseudoalteromonas translucida (strain TAC 125)).